The sequence spans 130 residues: Small ribosomal subunit protein uS11c (130 aa).

It belongs to the universal ribosomal protein uS11 family. As to quaternary structure, part of the 30S ribosomal subunit.

The protein localises to the plastid. Its subcellular location is the chloroplast. The polypeptide is Small ribosomal subunit protein uS11c (Chara vulgaris (Common stonewort)).